The sequence spans 359 residues: Tyrosine-protein phosphatase non-receptor type 7 (359 aa).

The segment at 1-33 (MVQACEGRSRAQLPTLSLGADMTQPPPTKAPAK) is disordered. The segment at 38-51 (LQERRGSSVALMLD) is interaction with MAP kinases. At Ser-44 the chain carries Phosphoserine. Position 66 is a phosphothreonine (Thr-66). Phosphoserine occurs at positions 93 and 143. Residues 97-349 (LEEEFLKIPS…QFLHHTLALY (253 aa)) enclose the Tyrosine-protein phosphatase domain. Substrate is bound by residues Asp-257, 290-296 (CSAGIGR), and Gln-334. Cys-290 functions as the Phosphocysteine intermediate in the catalytic mechanism. At Cys-290 the chain carries Cysteine sulfenic acid (-SOH).

This sequence belongs to the protein-tyrosine phosphatase family. Non-receptor class subfamily. Post-translationally, oxidized at active site cysteine. Treatment with pervanadate (vanadate and H(2)O(2)) or with antigen enhanced oxidation of active site cysteine. Expressed in bone marrow-derived mast cells.

The protein localises to the cytoplasm. The protein resides in the cytoskeleton. The enzyme catalyses O-phospho-L-tyrosyl-[protein] + H2O = L-tyrosyl-[protein] + phosphate. Its activity is regulated as follows. Inhibited upon FCER1A triggering. Functionally, may play a role in the regulation of T and B-lymphocyte development and signal transduction. The sequence is that of Tyrosine-protein phosphatase non-receptor type 7 (Ptpn7) from Mus musculus (Mouse).